Here is a 239-residue protein sequence, read N- to C-terminus: Putative ABC transporter ATP-binding protein AlbC (239 aa).

Positions 4–238 (LDIHDVSVWY…RREFFEVIGH (235 aa)) constitute an ABC transporter domain. An ATP-binding site is contributed by 37–44 (GVNGAGKT).

Belongs to the ABC transporter superfamily.

Involved in the production of the bacteriocin subtilosin. Required for immunity to subtilosin. The sequence is that of Putative ABC transporter ATP-binding protein AlbC (albC) from Bacillus subtilis (strain 168).